A 1312-amino-acid chain; its full sequence is Cyclic GMP-binding protein D (1312 aa).

Positions 26-155 constitute an N-terminal Ras-GEF domain; the sequence is GFSAIKSCSL…EFFKAKKMAR (130 aa). Low complexity-rich tracts occupy residues 206-236 and 275-296; these read NTMN…SSPN and NGTS…LFNQ. 2 disordered regions span residues 206-244 and 260-326; these read NTMN…RSSM and NFNN…NNVN. The span at 297–310 shows a compositional bias: polar residues; the sequence is QPSLSMLNDDGSVQ. The segment covering 311–326 has biased composition (low complexity); the sequence is NNNNNNNNNNNNNNVN. The Ras-GEF domain maps to 353-582; it reads LPEAIAKELT…FRLSKIREET (230 aa). Residues 586–658 are disordered; that stretch reads QSLKESNGIG…NCGNGSGISS (73 aa). A compositionally biased stretch (low complexity) spans 591–612; it reads SNGIGNSNSTSGGSSSSLVNKD. Residues 613–625 are compositionally biased toward gly residues; sequence GSGGGGGSGGGGS. The span at 630 to 644 shows a compositional bias: basic and acidic residues; sequence GDGKGDGKDNRDGRG. The segment covering 646-657 has biased composition (low complexity); the sequence is GNSNCGNGSGIS. A nucleoside 3',5'-cyclic phosphate is bound at residue 698 to 857; that stretch reads VSSTLSEREW…ATFYKFIGVI (160 aa). The GRAM domain occupies 940 to 1006; the sequence is SSFRTKFGLS…DKILTVDKNI (67 aa). Positions 1059–1087 are enriched in low complexity; it reads QQQQPSQQPSQQQSQSSQLQQSVSASSTT. 2 disordered regions span residues 1059-1108 and 1167-1210; these read QQQQ…IKDL and NNIN…NSSI. A nucleoside 3',5'-cyclic phosphate is bound by residues 1105 to 1218 and 1182 to 1303; these read IKDL…SNTS and NNNN…LACV.

Its function is as follows. Promotes the exchange of Ras-bound GDP by GTP. Induces the formation of substrate-attached pseudopodia, that leads to increased adhesion and thereby negatively influencing cell speed and polarity. The sequence is that of Cyclic GMP-binding protein D (gbpD) from Dictyostelium discoideum (Social amoeba).